The sequence spans 173 residues: Small ribosomal subunit protein uS9 (173 aa).

A disordered region spans residues serine 20–arginine 53.

Belongs to the universal ribosomal protein uS9 family.

The sequence is that of Small ribosomal subunit protein uS9 from Streptomyces avermitilis (strain ATCC 31267 / DSM 46492 / JCM 5070 / NBRC 14893 / NCIMB 12804 / NRRL 8165 / MA-4680).